Consider the following 306-residue polypeptide: Tryptophan 2,3-dioxygenase (306 aa).

A disordered region spans residues Met1 to Ala33. Substrate contacts are provided by residues Phe75–His79, Tyr137, and Arg141. His264 serves as a coordination point for heme. Thr278 contacts substrate.

It belongs to the tryptophan 2,3-dioxygenase family. As to quaternary structure, homotetramer. Requires heme as cofactor.

It carries out the reaction L-tryptophan + O2 = N-formyl-L-kynurenine. It participates in amino-acid degradation; L-tryptophan degradation via kynurenine pathway; L-kynurenine from L-tryptophan: step 1/2. Its function is as follows. Heme-dependent dioxygenase that catalyzes the oxidative cleavage of the L-tryptophan (L-Trp) pyrrole ring and converts L-tryptophan to N-formyl-L-kynurenine. Catalyzes the oxidative cleavage of the indole moiety. This is Tryptophan 2,3-dioxygenase from Burkholderia pseudomallei (strain 668).